Reading from the N-terminus, the 240-residue chain is Zein-alpha 19C1 (240 aa).

A signal peptide spans 1 to 21 (MATKIFSLLMLLALSACVANA).

Belongs to the zein family.

Functionally, zeins are major seed storage proteins. The polypeptide is Zein-alpha 19C1 (Zea mays (Maize)).